A 267-amino-acid polypeptide reads, in one-letter code: Elsinochrome reductase 1 (267 aa).

NADP(+) is bound by residues isoleucine 26, aspartate 72, asparagine 99, and arginine 132. Serine 149 acts as the Proton donor in catalysis. NADP(+) contacts are provided by tyrosine 163, lysine 167, isoleucine 196, and threonine 198. Tyrosine 163 acts as the Proton acceptor in catalysis. Lysine 167 serves as the catalytic Lowers pKa of active site Tyr.

The protein belongs to the short-chain dehydrogenases/reductases (SDR) family.

Reductase; part of the gene cluster that mediates the biosynthesis of elsinochromes, pigments consisting of at least four interconvertible tautomers (A, B, C and D) that have a core phenolic quinone to which various side chains are attached and which play an important role in fungal pathogenesis. The non-reducing polyketide synthase PKS1 was proposed to iteratively catalyze decarboxylation between acetyl-CoA and malonyl-CoA subunits for polyketide chain elongation. The released polyketide undergoes cyclization to form an aromatic ring, and proceeds via serial modification steps to produce the heptaketide back- bone of elsinochrome. As elsinochrome has a symmetrical structure, two identical heptaketides are fused to form a core 1,2-dihydrobenzo-perylene ring structure, which can then be successively modified to produce the various derivatives of elsinochrome. Some of these reactions may be cooperatively carried out, at least in part, by the products of RDT1, OXR1 and PKS1. PRF1, embedded within the elsinochrome cluster possibly functions to stabilize some of the biosynthetic enzymes required for elsinochrome production. As prefoldin is a hexamer containing 2 a and 4 b subunits, additional prefoldin subunits, whose coding genes may not immediately link to the elsinochrome biosynthetic gene cluster, are required to fulfill the chaperone function. In addition, no methyltransferase-coding gene exists within the biosynthetic gene cluster, even though elsinochrome has four methyl groups at positions C3, C7, C8 and C12. Apparently, the identified gene cluster does not contain the entire entourage of genes responsible for elsinochrome biosynthesis. Once elsinochrome is synthesized, it must be exported outside the fungal cells, which is probably accomplished by the ECT1 transporter, to avoid toxicity. This chain is Elsinochrome reductase 1, found in Elsinoe fawcettii (Citrus scab fungus).